The sequence spans 371 residues: MQFVAVLAALGALVAPAAAYPHAPMNETLVDVQLTAVGNTMVKATITNKGDSVLNMLQFNTIMDENPTRKVMVFQDGVEVPFTGMMPRYLMSDLTEEFFTTLPPQASVEHTFDIAATHDLSAGGKYVISASGAVPTAEEHSTTITSTALYESNELHMEVDGVQAAAVEQAMNFTPEMQSIHARALEKRTKIVSGSCNQNTLRATMNALGNSARLAQAASRAASQNPRKFQEYFRTNDANAKQRVIARLNSVARESSSANAGVTTYYCSDTMGGCKPRVLAYTLPSRNLVVNCPIYYNLPPLTKQCHAQDQATTTLHEFTHNPAVASPHCQDYAYGYQQCISLPAAKAVQNADNYALFANGMLSNLFVFTLN.

Residues 1 to 19 (MQFVAVLAALGALVAPAAA) form the signal peptide. Residues 20 to 188 (YPHAPMNETL…SIHARALEKR (169 aa)) constitute a propeptide that is removed on maturation. 2 disulfide bridges follow: Cys-196-Cys-267 and Cys-274-Cys-292. Residue His-316 coordinates Zn(2+). Residue Glu-317 is part of the active site. Residues His-320 and Asp-331 each coordinate Zn(2+).

It belongs to the peptidase M35 family. The cofactor is Zn(2+).

It localises to the secreted. It catalyses the reaction Preferential cleavage of bonds with hydrophobic residues in P1'. Also 3-Asn-|-Gln-4 and 8-Gly-|-Ser-9 bonds in insulin B chain.. Functionally, secreted metalloproteinase that allows assimilation of proteinaceous substrates. Shows high activities on basic nuclear substrates such as histone and protamine. May be involved in virulence. The chain is Neutral protease 2 homolog MGYG_03465 from Arthroderma gypseum (strain ATCC MYA-4604 / CBS 118893) (Microsporum gypseum).